Here is a 447-residue protein sequence, read N- to C-terminus: Phosphoglucosamine mutase (447 aa).

S88 serves as the catalytic Phosphoserine intermediate. Mg(2+) is bound by residues S88, D231, D233, and D235. Position 88 is a phosphoserine (S88).

This sequence belongs to the phosphohexose mutase family. Monomer. Also forms large aggregates. Requires Mg(2+) as cofactor. In terms of processing, activated by phosphorylation. Glucose-1,6-bisphosphate or fructose-1,6-bisphosphate can activate the enzyme in vitro. However, since glucose-1,6-bisphosphate is not believed to form in methanogens, the physiologically relevant activator might be a serine kinase protein.

It catalyses the reaction alpha-D-glucosamine 1-phosphate = D-glucosamine 6-phosphate. Functionally, catalyzes the conversion of glucosamine-6-phosphate to glucosamine-1-phosphate. Also catalyzes the isomerization of glucose-1-phosphate to glucose-6-phosphate, but at a 5-fold lower rate. The protein is Phosphoglucosamine mutase (glmM) of Methanococcus maripaludis (strain DSM 14266 / JCM 13030 / NBRC 101832 / S2 / LL).